The primary structure comprises 79 residues: ATP synthase subunit c (79 aa).

A run of 2 helical transmembrane segments spans residues 11–31 (MAAAVMMGLAAIGAAIGIGIL) and 53–73 (FFIVMGLVDAIPMIAVGLGLY).

The protein belongs to the ATPase C chain family. F-type ATPases have 2 components, F(1) - the catalytic core - and F(0) - the membrane proton channel. F(1) has five subunits: alpha(3), beta(3), gamma(1), delta(1), epsilon(1). F(0) has three main subunits: a(1), b(2) and c(10-14). The alpha and beta chains form an alternating ring which encloses part of the gamma chain. F(1) is attached to F(0) by a central stalk formed by the gamma and epsilon chains, while a peripheral stalk is formed by the delta and b chains.

The protein localises to the cell inner membrane. F(1)F(0) ATP synthase produces ATP from ADP in the presence of a proton or sodium gradient. F-type ATPases consist of two structural domains, F(1) containing the extramembraneous catalytic core and F(0) containing the membrane proton channel, linked together by a central stalk and a peripheral stalk. During catalysis, ATP synthesis in the catalytic domain of F(1) is coupled via a rotary mechanism of the central stalk subunits to proton translocation. Functionally, key component of the F(0) channel; it plays a direct role in translocation across the membrane. A homomeric c-ring of between 10-14 subunits forms the central stalk rotor element with the F(1) delta and epsilon subunits. The protein is ATP synthase subunit c of Citrobacter koseri (strain ATCC BAA-895 / CDC 4225-83 / SGSC4696).